We begin with the raw amino-acid sequence, 184 residues long: UPF0179 protein Pcal_2106 (184 aa).

Residues glycine 146 to leucine 161 are compositionally biased toward low complexity. Residues glycine 146–proline 184 form a disordered region.

It belongs to the UPF0179 family.

The chain is UPF0179 protein Pcal_2106 from Pyrobaculum calidifontis (strain DSM 21063 / JCM 11548 / VA1).